A 320-amino-acid chain; its full sequence is Lipoyl synthase (320 aa).

The tract at residues 1–27 (MRVEIDHRNSGGGKLRHPEKQHRPDNP) is disordered. The span at 16–25 (RHPEKQHRPD) shows a compositional bias: basic and acidic residues. C61, C66, C72, C87, C91, C94, and S300 together coordinate [4Fe-4S] cluster. In terms of domain architecture, Radical SAM core spans 73 to 289 (WSQRHATMMI…AAMARAKGFL (217 aa)).

It belongs to the radical SAM superfamily. Lipoyl synthase family. The cofactor is [4Fe-4S] cluster.

The protein localises to the cytoplasm. The enzyme catalyses [[Fe-S] cluster scaffold protein carrying a second [4Fe-4S](2+) cluster] + N(6)-octanoyl-L-lysyl-[protein] + 2 oxidized [2Fe-2S]-[ferredoxin] + 2 S-adenosyl-L-methionine + 4 H(+) = [[Fe-S] cluster scaffold protein] + N(6)-[(R)-dihydrolipoyl]-L-lysyl-[protein] + 4 Fe(3+) + 2 hydrogen sulfide + 2 5'-deoxyadenosine + 2 L-methionine + 2 reduced [2Fe-2S]-[ferredoxin]. It participates in protein modification; protein lipoylation via endogenous pathway; protein N(6)-(lipoyl)lysine from octanoyl-[acyl-carrier-protein]: step 2/2. Its function is as follows. Catalyzes the radical-mediated insertion of two sulfur atoms into the C-6 and C-8 positions of the octanoyl moiety bound to the lipoyl domains of lipoate-dependent enzymes, thereby converting the octanoylated domains into lipoylated derivatives. This is Lipoyl synthase from Acidiphilium cryptum (strain JF-5).